Reading from the N-terminus, the 223-residue chain is Sporulation-specific protein 19 (223 aa).

A signal peptide spans 1-20; that stretch reads MKKQILIVAAQSILCSTVFG. Asn198 carries GPI-anchor amidated asparagine lipidation. Residues 199–223 constitute a propeptide, removed in mature form; that stretch reads ASNFLTPTTVALAVLLTILLFIQAY.

Post-translationally, the GPI-anchor is attached to the protein in the endoplasmic reticulum and serves to target the protein to the cell surface. There, the glucosamine-inositol phospholipid moiety is cleaved off and the GPI-modified mannoprotein is covalently attached via its lipidless GPI glycan remnant to the 1,6-beta-glucan of the outer cell wall layer.

Its subcellular location is the secreted. The protein resides in the cell wall. It is found in the membrane. Functionally, involved in sporulation. Essential for completion of the nuclear division. This Saccharomyces cerevisiae (strain ATCC 204508 / S288c) (Baker's yeast) protein is Sporulation-specific protein 19 (SPO19).